A 597-amino-acid chain; its full sequence is Membrane protein insertase YidC (597 aa).

Residues tyrosine 8–serine 28 traverse the membrane as a helical segment. The interval alanine 38–serine 75 is disordered. Positions alanine 41–proline 70 are enriched in low complexity. 4 helical membrane passes run leucine 372–phenylalanine 392, tryptophan 446–isoleucine 466, leucine 491–valine 511, and phenylalanine 535–isoleucine 555.

Belongs to the OXA1/ALB3/YidC family. Type 1 subfamily. Interacts with the Sec translocase complex via SecD. Specifically interacts with transmembrane segments of nascent integral membrane proteins during membrane integration.

It localises to the cell inner membrane. Its function is as follows. Required for the insertion and/or proper folding and/or complex formation of integral membrane proteins into the membrane. Involved in integration of membrane proteins that insert both dependently and independently of the Sec translocase complex, as well as at least some lipoproteins. Aids folding of multispanning membrane proteins. The protein is Membrane protein insertase YidC of Sinorhizobium medicae (strain WSM419) (Ensifer medicae).